The sequence spans 122 residues: Large ribosomal subunit protein uL14 (122 aa).

The protein belongs to the universal ribosomal protein uL14 family. Part of the 50S ribosomal subunit. Forms a cluster with proteins L3 and L19. In the 70S ribosome, L14 and L19 interact and together make contacts with the 16S rRNA in bridges B5 and B8.

Binds to 23S rRNA. Forms part of two intersubunit bridges in the 70S ribosome. The polypeptide is Large ribosomal subunit protein uL14 (Bacillus anthracis (strain A0248)).